The primary structure comprises 51 residues: MARFPEAEARIFRKLICMRCGATNPWGAKKCRKCGYKGLRPKAREPRGGGR.

This sequence belongs to the eukaryotic ribosomal protein eL40 family.

In Thermococcus gammatolerans (strain DSM 15229 / JCM 11827 / EJ3), this protein is Large ribosomal subunit protein eL40.